The primary structure comprises 755 residues: Polyribonucleotide nucleotidyltransferase (755 aa).

Mg(2+)-binding residues include Asp-493 and Asp-499. A KH domain is found at 560 to 619 (PRIMTIQIPVDKIGALIGPGGKTIRNICDTTGAQIDIEDDGRVFITAPDGEAAKKAISMI). The S1 motif domain maps to 629-698 (GDIFLGKVVS…NTGKISLSRR (70 aa)). Residues 704–755 (ETPEARKAAGAAPRPRPREEQRGGREEPRSLREELRGPRRDGERPRPRRRDD) are disordered. Residues 719–755 (RPREEQRGGREEPRSLREELRGPRRDGERPRPRRRDD) show a composition bias toward basic and acidic residues.

The protein belongs to the polyribonucleotide nucleotidyltransferase family. It depends on Mg(2+) as a cofactor.

The protein localises to the cytoplasm. It catalyses the reaction RNA(n+1) + phosphate = RNA(n) + a ribonucleoside 5'-diphosphate. In terms of biological role, involved in mRNA degradation. Catalyzes the phosphorolysis of single-stranded polyribonucleotides processively in the 3'- to 5'-direction. This is Polyribonucleotide nucleotidyltransferase from Chloroflexus aggregans (strain MD-66 / DSM 9485).